Here is a 332-residue protein sequence, read N- to C-terminus: Autoinducer 2 import system permease protein LsrD (332 aa).

A run of 10 helical transmembrane segments spans residues Tyr7–Ile27, Ile45–Ile65, Thr70–Leu90, Ala91–Ile111, Leu118–Met138, Phe162–Leu182, Val216–Gly236, Ser240–Asn260, Ile261–Leu281, and Ala288–Val308.

It belongs to the binding-protein-dependent transport system permease family. AraH/RbsC subfamily. As to quaternary structure, the complex is composed of two ATP-binding proteins (LsrA), two transmembrane proteins (LsrC and LsrD) and a solute-binding protein (LsrB).

It localises to the cell inner membrane. Functionally, part of the ABC transporter complex LsrABCD involved in autoinducer 2 (AI-2) import. Probably responsible for the translocation of the substrate across the membrane. This is Autoinducer 2 import system permease protein LsrD (lsrD) from Salmonella paratyphi B (strain ATCC BAA-1250 / SPB7).